Consider the following 306-residue polypeptide: Ribosomal RNA small subunit methyltransferase H (306 aa).

S-adenosyl-L-methionine is bound by residues 36–38 (GGH), Asp56, Phe80, Asp97, and Gln104. The disordered stretch occupies residues 280-306 (ASEEEVAGNPRSRSAVMRVAERTGEAA).

This sequence belongs to the methyltransferase superfamily. RsmH family.

It localises to the cytoplasm. The catalysed reaction is cytidine(1402) in 16S rRNA + S-adenosyl-L-methionine = N(4)-methylcytidine(1402) in 16S rRNA + S-adenosyl-L-homocysteine + H(+). In terms of biological role, specifically methylates the N4 position of cytidine in position 1402 (C1402) of 16S rRNA. This chain is Ribosomal RNA small subunit methyltransferase H, found in Polaromonas naphthalenivorans (strain CJ2).